The sequence spans 477 residues: Tripartite motif-containing protein 72 (477 aa).

Zn(2+)-binding residues include cysteine 14, cysteine 17, cysteine 29, histidine 31, cysteine 34, cysteine 37, cysteine 53, cysteine 56, cysteine 86, histidine 89, cysteine 97, aspartate 100, cysteine 105, cysteine 108, histidine 114, and histidine 117. The RING-type zinc-finger motif lies at 14-57; that stretch reads CPLCLQLFDAPVTAECGHSFCRACLGRVAGEPAADGTVLCPCCQ. The B box-type zinc-finger motif lies at 81–122; sequence VPQGHCEEHLDPLSIYCEQDRALVCGVCASLGSHRGHRLLPA. A coiled-coil region spans residues 135–232; it reads QQKLQLQEAC…EKVLEEVADK (98 aa). An S-nitrosocysteine modification is found at cysteine 144. Phosphoserine is present on serine 255. The 205-residue stretch at 271 to 475 folds into the B30.2/SPRY domain; the sequence is DFKFQVWRKM…PLLLVGPEGA (205 aa).

This sequence belongs to the TRIM/RBCC family. Homodimer. Homooligomer; disulfide-linked. Oligomerizes on the phospholipid membrane. Interacts with DYSF and CAV3. In terms of processing, disulfide bond formation at Cys-242 occurs in case of membrane damage that cause the entry of the oxidized milieu of the extracellular space, resulting in homooligomerization. S-nitrosylation at Cys-144 stabilizes TRIM72 and protects against oxidation-induced protein degradation and cell death.

It is found in the cell membrane. The protein localises to the sarcolemma. Its subcellular location is the cytoplasmic vesicle membrane. It carries out the reaction S-ubiquitinyl-[E2 ubiquitin-conjugating enzyme]-L-cysteine + [acceptor protein]-L-lysine = [E2 ubiquitin-conjugating enzyme]-L-cysteine + N(6)-ubiquitinyl-[acceptor protein]-L-lysine.. Its pathway is protein modification; protein ubiquitination. Its activity is regulated as follows. Specifically binds phosphatidylserine. The binding to phospholipids enhances ubiquitination activity. Its function is as follows. Muscle-specific E3 ubiquitin-protein ligase that plays a central role in cell membrane repair by nucleating the assembly of the repair machinery at injury sites. Its ubiquitination activity is mediated by E2 ubiquitin-conjugating enzymes UBE2D1, UBE2D2 and UBE2D3. Acts as a sensor of oxidation: upon membrane damage, entry of extracellular oxidative environment results in disulfide bond formation and homooligomerization at the injury site. This oligomerization acts as a nucleation site for recruitment of TRIM72-containing vesicles to the injury site, leading to membrane patch formation. Probably acts upstream of the Ca(2+)-dependent membrane resealing process. Required for transport of DYSF to sites of cell injury during repair patch formation. Regulates membrane budding and exocytosis. May be involved in the regulation of the mobility of KCNB1-containing endocytic vesicles. This chain is Tripartite motif-containing protein 72, found in Homo sapiens (Human).